Consider the following 391-residue polypeptide: 8-amino-7-oxononanoate synthase (391 aa).

Residue arginine 20 participates in substrate binding. 106–107 (GY) contacts pyridoxal 5'-phosphate. Histidine 131 lines the substrate pocket. Pyridoxal 5'-phosphate-binding residues include serine 178, histidine 206, and threonine 234. Lysine 237 is subject to N6-(pyridoxal phosphate)lysine. Threonine 353 contacts substrate.

It belongs to the class-II pyridoxal-phosphate-dependent aminotransferase family. BioF subfamily. Homodimer. Pyridoxal 5'-phosphate is required as a cofactor.

The catalysed reaction is 6-carboxyhexanoyl-[ACP] + L-alanine + H(+) = (8S)-8-amino-7-oxononanoate + holo-[ACP] + CO2. It participates in cofactor biosynthesis; biotin biosynthesis. Its function is as follows. Catalyzes the decarboxylative condensation of pimeloyl-[acyl-carrier protein] and L-alanine to produce 8-amino-7-oxononanoate (AON), [acyl-carrier protein], and carbon dioxide. This Trichlorobacter lovleyi (strain ATCC BAA-1151 / DSM 17278 / SZ) (Geobacter lovleyi) protein is 8-amino-7-oxononanoate synthase.